The sequence spans 798 residues: Phenylalanine--tRNA ligase beta subunit (798 aa).

One can recognise a tRNA-binding domain in the interval 38–148 (IGNYEKVVVG…PEAPVGEKIE (111 aa)). One can recognise a B5 domain in the interval 400-475 (FTPKVIAVSL…RYLGYNNFPD (76 aa)). Positions 453, 459, 462, and 463 each coordinate Mg(2+). Residues 703–796 (SPYPEVKRDI…LEAKTGAKLR (94 aa)) form the FDX-ACB domain.

This sequence belongs to the phenylalanyl-tRNA synthetase beta subunit family. Type 1 subfamily. In terms of assembly, tetramer of two alpha and two beta subunits. The cofactor is Mg(2+).

It localises to the cytoplasm. It carries out the reaction tRNA(Phe) + L-phenylalanine + ATP = L-phenylalanyl-tRNA(Phe) + AMP + diphosphate + H(+). This Carboxydothermus hydrogenoformans (strain ATCC BAA-161 / DSM 6008 / Z-2901) protein is Phenylalanine--tRNA ligase beta subunit.